Here is a 507-residue protein sequence, read N- to C-terminus: Maturase K (507 aa).

Belongs to the intron maturase 2 family. MatK subfamily.

It localises to the plastid. Its subcellular location is the chloroplast. In terms of biological role, usually encoded in the trnK tRNA gene intron. Probably assists in splicing its own and other chloroplast group II introns. This is Maturase K from Robinia pseudoacacia (Black locust).